The following is a 278-amino-acid chain: Ubiquinone biosynthesis protein COQ4, mitochondrial (278 aa).

The transit peptide at 1–28 directs the protein to the mitochondrion; it reads MATPTSVRIAGFRSLQALCAQRTVTRNF. Zn(2+)-binding residues include histidine 164, aspartate 165, histidine 168, and glutamate 180.

It belongs to the COQ4 family. In terms of assembly, component of a multi-subunit COQ enzyme complex, composed of at least COQ3, COQ4, COQ5, COQ6, COQ7 and COQ9. The cofactor is Zn(2+).

The protein resides in the mitochondrion inner membrane. The enzyme catalyses a 4-hydroxy-3-methoxy-5-(all-trans-polyprenyl)benzoate + H(+) = a 2-methoxy-6-(all-trans-polyprenyl)phenol + CO2. It participates in cofactor biosynthesis; ubiquinone biosynthesis. Lyase that catalyzes the C1-decarboxylation of 4-hydroxy-3-methoxy-5-(all-trans-polyprenyl)benzoic acid into 2-methoxy-6-(all-trans-polyprenyl)phenol during ubiquinone biosynthesis. This chain is Ubiquinone biosynthesis protein COQ4, mitochondrial, found in Uncinocarpus reesii (strain UAMH 1704).